A 546-amino-acid chain; its full sequence is Chaperonin GroEL (546 aa).

Residues 30-33, Lys51, 87-91, Gly415, 479-481, and Asp495 each bind ATP; these read TLGP, DGTTT, and NAA.

This sequence belongs to the chaperonin (HSP60) family. Forms a cylinder of 14 subunits composed of two heptameric rings stacked back-to-back. Interacts with the co-chaperonin GroES.

The protein resides in the cytoplasm. It carries out the reaction ATP + H2O + a folded polypeptide = ADP + phosphate + an unfolded polypeptide.. Its function is as follows. Together with its co-chaperonin GroES, plays an essential role in assisting protein folding. The GroEL-GroES system forms a nano-cage that allows encapsulation of the non-native substrate proteins and provides a physical environment optimized to promote and accelerate protein folding. This chain is Chaperonin GroEL, found in Stutzerimonas stutzeri (strain A1501) (Pseudomonas stutzeri).